Reading from the N-terminus, the 729-residue chain is Glutamine synthetase (729 aa).

A GS beta-grasp domain is found at 85-174 (THYTHWFQPL…IPTIFISYTG (90 aa)). The GS catalytic domain occupies 179–615 (YKTPLLKALA…VLGDLAINHI (437 aa)). Residues Glu215, Glu217, Glu286, and Glu293 each coordinate Mg(2+). L-glutamate is bound by residues 337-338 (NG) and Gly338. His342 contacts Mg(2+). Positions 346 and 458 each coordinate ATP. Position 458 (Arg458) interacts with L-glutamate.

The protein belongs to the glutamine synthetase family. In terms of assembly, homohexamer. It depends on Mg(2+) as a cofactor.

It is found in the cytoplasm. It catalyses the reaction L-glutamate + NH4(+) + ATP = L-glutamine + ADP + phosphate + H(+). With respect to regulation, inhibited by L-histidine (46%), L-arginine (38%) and L-methionine-DL-sulphoximine. The activity of this enzyme is not controlled by adenylation. In terms of biological role, catalyzes the ATP-dependent biosynthesis of glutamine from glutamate and ammonia. In Bacteroides fragilis (strain YCH46), this protein is Glutamine synthetase.